Reading from the N-terminus, the 66-residue chain is Brevinin-1DYb (66 aa).

Positions 1 to 22 are cleaved as a signal peptide; the sequence is MFTLKKSLLLLFFLGTISLSLC. Positions 23–44 are excised as a propeptide; sequence EEERNAEEERRDYPEERDVEVE. Cysteines 60 and 66 form a disulfide.

Expressed by the skin glands.

It is found in the secreted. Functionally, antimicrobial peptide. Has low activity against the Gram-positive bacterium S.aureus and the Gram-negative bacterium E.coli (MIC&lt;15 uM). Has a strong hemolytic activity. This chain is Brevinin-1DYb, found in Rana dybowskii (Dybovsky's frog).